The sequence spans 993 residues: Isoleucine--tRNA ligase (993 aa).

A 'HIGH' region motif is present at residues 64–74; sequence PYANGNIHIGH. L-isoleucyl-5'-AMP is bound at residue E621. The 'KMSKS' region motif lies at 662–666; sequence KMSKS. K665 lines the ATP pocket.

Belongs to the class-I aminoacyl-tRNA synthetase family. IleS type 1 subfamily. In terms of assembly, monomer.

The protein localises to the cytoplasm. It catalyses the reaction tRNA(Ile) + L-isoleucine + ATP = L-isoleucyl-tRNA(Ile) + AMP + diphosphate. Functionally, catalyzes the attachment of isoleucine to tRNA(Ile). As IleRS can inadvertently accommodate and process structurally similar amino acids such as valine, to avoid such errors it has two additional distinct tRNA(Ile)-dependent editing activities. One activity is designated as 'pretransfer' editing and involves the hydrolysis of activated Val-AMP. The other activity is designated 'posttransfer' editing and involves deacylation of mischarged Val-tRNA(Ile). This Mesorhizobium japonicum (strain LMG 29417 / CECT 9101 / MAFF 303099) (Mesorhizobium loti (strain MAFF 303099)) protein is Isoleucine--tRNA ligase.